The following is a 693-amino-acid chain: Homoaconitase, mitochondrial (693 aa).

Residues 1 to 17 (MFRVQRLRMFSTSRALY) constitute a mitochondrion transit peptide. Positions 338, 405, and 408 each coordinate [4Fe-4S] cluster.

It belongs to the aconitase/IPM isomerase family. [4Fe-4S] cluster serves as cofactor.

It localises to the mitochondrion. It carries out the reaction (2R,3S)-homoisocitrate = cis-homoaconitate + H2O. Its pathway is amino-acid biosynthesis; L-lysine biosynthesis via AAA pathway; L-alpha-aminoadipate from 2-oxoglutarate: step 3/5. In terms of biological role, catalyzes the reversible hydration of cis-homoaconitate to (2R,3S)-homoisocitrate, a step in the alpha-aminoadipate pathway for lysine biosynthesis. In Kluyveromyces lactis (strain ATCC 8585 / CBS 2359 / DSM 70799 / NBRC 1267 / NRRL Y-1140 / WM37) (Yeast), this protein is Homoaconitase, mitochondrial (LYS4).